We begin with the raw amino-acid sequence, 608 residues long: Threonine--tRNA ligase (608 aa).

Positions 1 to 143 are editing domain; the sequence is MRVLYIHAER…SFKPEEGRAD (143 aa). Catalytic regions lie at residues 194-490 and 195-490; these read PKYL…PRLP and KYLE…PRLP. Positions 287, 338, and 459 each coordinate Zn(2+).

This sequence belongs to the class-II aminoacyl-tRNA synthetase family. In terms of assembly, homodimer. Zn(2+) serves as cofactor.

It localises to the cytoplasm. It carries out the reaction tRNA(Thr) + L-threonine + ATP = L-threonyl-tRNA(Thr) + AMP + diphosphate + H(+). Functionally, catalyzes the attachment of threonine to tRNA(Thr) in a two-step reaction: L-threonine is first activated by ATP to form Thr-AMP and then transferred to the acceptor end of tRNA(Thr). Also edits incorrectly charged L-seryl-tRNA(Thr). The chain is Threonine--tRNA ligase from Pyrobaculum aerophilum (strain ATCC 51768 / DSM 7523 / JCM 9630 / CIP 104966 / NBRC 100827 / IM2).